A 175-amino-acid chain; its full sequence is MSLNRSEKEAVINEVTSLAAKAQTLVIAEYRGITVADMTKLRSDARSKGVSLSVLKNTLARRAVAGSQFDVVADQMTGPLIYGFSEDAVAAAKVVADFAKTNDKLVIRGGAFAGKALDVNGVKQLANIPSKEVLLAQLCGLLMSPISRTAVVLGALAAKKSEGSAEEPAAEAVAA.

The protein belongs to the universal ribosomal protein uL10 family. Part of the ribosomal stalk of the 50S ribosomal subunit. The N-terminus interacts with L11 and the large rRNA to form the base of the stalk. The C-terminus forms an elongated spine to which L12 dimers bind in a sequential fashion forming a multimeric L10(L12)X complex.

Forms part of the ribosomal stalk, playing a central role in the interaction of the ribosome with GTP-bound translation factors. The polypeptide is Large ribosomal subunit protein uL10 (Delftia acidovorans (strain DSM 14801 / SPH-1)).